The chain runs to 127 residues: MALSKAEILDAIAGMSVLELSELIKEMEEKFGVSAAAAAVAVAAPAAGGAGAAAAEEQTEFTVVLLEAGANKVSVIKAVRELTGLGLKEAKDLVDGAPKPVKEALPKADAEAAKKKLEEAGAKVEVK.

It belongs to the bacterial ribosomal protein bL12 family. Homodimer. Part of the ribosomal stalk of the 50S ribosomal subunit. Forms a multimeric L10(L12)X complex, where L10 forms an elongated spine to which 2 to 4 L12 dimers bind in a sequential fashion. Binds GTP-bound translation factors.

Functionally, forms part of the ribosomal stalk which helps the ribosome interact with GTP-bound translation factors. Is thus essential for accurate translation. The protein is Large ribosomal subunit protein bL12 of Bordetella bronchiseptica (strain ATCC BAA-588 / NCTC 13252 / RB50) (Alcaligenes bronchisepticus).